Here is a 329-residue protein sequence, read N- to C-terminus: Biotin synthase (329 aa).

The region spanning 38 to 262 is the Radical SAM core domain; it reads NTIQVSTLLS…IMPYSYIRLS (225 aa). [4Fe-4S] cluster-binding residues include Cys53, Cys57, and Cys60. 4 residues coordinate [2Fe-2S] cluster: Cys97, Cys128, Cys188, and Arg260.

Belongs to the radical SAM superfamily. Biotin synthase family. In terms of assembly, homodimer. Requires [4Fe-4S] cluster as cofactor. [2Fe-2S] cluster is required as a cofactor.

The enzyme catalyses (4R,5S)-dethiobiotin + (sulfur carrier)-SH + 2 reduced [2Fe-2S]-[ferredoxin] + 2 S-adenosyl-L-methionine = (sulfur carrier)-H + biotin + 2 5'-deoxyadenosine + 2 L-methionine + 2 oxidized [2Fe-2S]-[ferredoxin]. It participates in cofactor biosynthesis; biotin biosynthesis; biotin from 7,8-diaminononanoate: step 2/2. Functionally, catalyzes the conversion of dethiobiotin (DTB) to biotin by the insertion of a sulfur atom into dethiobiotin via a radical-based mechanism. The sequence is that of Biotin synthase from Acinetobacter baylyi (strain ATCC 33305 / BD413 / ADP1).